A 112-amino-acid polypeptide reads, in one-letter code: AKSRSSRAGLQFPVGRVHRFLRKGNYAQRVGAGAPVYLAAVFEYLAAEILELAGNAAPDNKKTRIIPRHLQLAIRNDEELNKLLGGVTIAQGGVLPNIQAVLLPKKTAKSSK.

Glutamine 91 bears the N5-methylglutamine mark. A Glycyl lysine isopeptide (Lys-Gly) (interchain with G-Cter in ubiquitin) cross-link involves residue lysine 106.

The protein belongs to the histone H2A family. As to quaternary structure, the nucleosome is a histone octamer containing two molecules each of H2A, H2B, H3 and H4 assembled in one H3-H4 heterotetramer and two H2A-H2B heterodimers. The octamer wraps approximately 147 bp of DNA. In terms of processing, monoubiquitination gives a specific tag for epigenetic transcriptional repression.

It is found in the nucleus. It localises to the chromosome. In terms of biological role, core component of nucleosome. Nucleosomes wrap and compact DNA into chromatin, limiting DNA accessibility to the cellular machineries which require DNA as a template. Histones thereby play a central role in transcription regulation, DNA repair, DNA replication and chromosomal stability. DNA accessibility is regulated via a complex set of post-translational modifications of histones, also called histone code, and nucleosome remodeling. The polypeptide is Histone H2A, sperm (Lytechinus pictus (Painted sea urchin)).